The sequence spans 315 residues: 1,2-dihydroxy-3,5-cyclohexadiene-1,4-dicarboxylate dehydrogenase (315 aa).

Residues histidine 159, histidine 203, and histidine 255 each coordinate a divalent metal cation.

The protein belongs to the PdxA family.

The enzyme catalyses (3S,4R)-3,4-dihydroxycyclohexa-1,5-diene-1,4-dicarboxylate + NAD(+) = 3,4-dihydroxybenzoate + CO2 + NADH. Functionally, involved in the degradation of terephthalate (TPA) via the protocatechuate (PCA) 4,5-cleavage pathway. Catalyzes the dehydrogenation of 1,2-dihydroxy-3,5-cyclohexadiene-1,4-dicarboxylate (DCD) to yield protocatechuate (PCA). The sequence is that of 1,2-dihydroxy-3,5-cyclohexadiene-1,4-dicarboxylate dehydrogenase (tphBI) from Comamonas sp.